Consider the following 163-residue polypeptide: Olfactory marker protein (163 aa).

A2 bears the N-acetylalanine mark.

This sequence belongs to the olfactory marker protein family. As to quaternary structure, interacts with BEX1 and BEX2. In terms of tissue distribution, uniquely associated with mature olfactory receptor neurons.

It localises to the cytoplasm. Its function is as follows. May act as a modulator of the olfactory signal-transduction cascade. The polypeptide is Olfactory marker protein (Omp) (Mus musculus (Mouse)).